The sequence spans 94 residues: Large ribosomal subunit protein eL43A (94 aa).

The C4-type zinc-finger motif lies at Cys-39–Cys-62.

The protein belongs to the eukaryotic ribosomal protein eL43 family. In terms of assembly, component of the large ribosomal subunit (LSU). Mature yeast ribosomes consist of a small (40S) and a large (60S) subunit. The 40S small subunit contains 1 molecule of ribosomal RNA (18S rRNA) and at least 33 different proteins. The large 60S subunit contains 3 rRNA molecules (25S, 5.8S and 5S rRNA) and at least 46 different proteins.

It localises to the cytoplasm. Functionally, component of the ribosome, a large ribonucleoprotein complex responsible for the synthesis of proteins in the cell. The small ribosomal subunit (SSU) binds messenger RNAs (mRNAs) and translates the encoded message by selecting cognate aminoacyl-transfer RNA (tRNA) molecules. The large subunit (LSU) contains the ribosomal catalytic site termed the peptidyl transferase center (PTC), which catalyzes the formation of peptide bonds, thereby polymerizing the amino acids delivered by tRNAs into a polypeptide chain. The nascent polypeptides leave the ribosome through a tunnel in the LSU and interact with protein factors that function in enzymatic processing, targeting, and the membrane insertion of nascent chains at the exit of the ribosomal tunnel. The protein is Large ribosomal subunit protein eL43A (rpl4301) of Schizosaccharomyces pombe (strain 972 / ATCC 24843) (Fission yeast).